The following is a 381-amino-acid chain: Bifunctional enzyme Fae/Hps (381 aa).

The segment at M1–L150 is formaldehyde-activating enzyme. The tract at residues V151 to L381 is 3-hexulose-6-phosphate synthase.

This sequence in the N-terminal section; belongs to the formaldehyde-activating enzyme family. It in the C-terminal section; belongs to the HPS/KGPDC family. HPS subfamily.

It carries out the reaction 5,6,7,8-tetrahydromethanopterin + formaldehyde = 5,10-methylenetetrahydromethanopterin + H2O. The enzyme catalyses D-ribulose 5-phosphate + formaldehyde = D-arabino-hex-3-ulose 6-phosphate. It participates in carbohydrate biosynthesis; D-ribose 5-phosphate biosynthesis. In terms of biological role, catalyzes the condensation of formaldehyde with tetrahydromethanopterin (H(4)MPT) to 5,10-methylenetetrahydromethanopterin. Functionally, catalyzes the reversible formation of ribulose-5-phosphate and formaldehyde from 3-hexulose-6-phosphate. This is Bifunctional enzyme Fae/Hps from Methanocaldococcus jannaschii (strain ATCC 43067 / DSM 2661 / JAL-1 / JCM 10045 / NBRC 100440) (Methanococcus jannaschii).